Consider the following 162-residue polypeptide: EF-hand calcium-binding domain-containing protein 11 (162 aa).

EF-hand domains lie at 18-53, 91-126, and 127-162; these read SERR…LFGY, LYRN…VAPK, and LPSR…GKAK. Ca(2+)-binding residues include Asp-140, Asp-142, Asp-144, His-146, and Asp-151.

The sequence is that of EF-hand calcium-binding domain-containing protein 11 (Efcab11) from Rattus norvegicus (Rat).